The sequence spans 175 residues: Large ribosomal subunit protein uL10 (175 aa).

Belongs to the universal ribosomal protein uL10 family. Part of the ribosomal stalk of the 50S ribosomal subunit. The N-terminus interacts with L11 and the large rRNA to form the base of the stalk. The C-terminus forms an elongated spine to which L12 dimers bind in a sequential fashion forming a multimeric L10(L12)X complex.

In terms of biological role, forms part of the ribosomal stalk, playing a central role in the interaction of the ribosome with GTP-bound translation factors. This Prochlorococcus marinus (strain MIT 9313) protein is Large ribosomal subunit protein uL10.